We begin with the raw amino-acid sequence, 83 residues long: Cyclin-dependent kinases regulatory subunit 2 (83 aa).

Belongs to the CKS family. In terms of assembly, interacts with CDKA-1, CYCD2-1 and AT4G14310.

Functionally, binds to the catalytic subunit of the cyclin dependent kinases and is essential for their biological function. In Arabidopsis thaliana (Mouse-ear cress), this protein is Cyclin-dependent kinases regulatory subunit 2 (CKS2).